The sequence spans 98 residues: U-scoloptoxin(16)-Er9a (98 aa).

Residues 1–24 form the signal peptide; the sequence is MVSYLCMSVSSGWLSIGKIAIKDG.

Belongs to the scoloptoxin-16 family. In terms of processing, contains 4 disulfide bonds. In terms of tissue distribution, expressed by the venom gland.

The protein localises to the secreted. In Ethmostigmus rubripes (Giant centipede), this protein is U-scoloptoxin(16)-Er9a.